Here is a 153-residue protein sequence, read N- to C-terminus: Xanthine-guanine phosphoribosyltransferase (153 aa).

5-phospho-alpha-D-ribose 1-diphosphate contacts are provided by residues 37–38 (RG), arginine 69, and 88–96 (DDLVDTGGT). A GMP-binding site is contributed by arginine 69. Aspartate 89 lines the Mg(2+) pocket. Residues aspartate 92 and isoleucine 135 each coordinate guanine. The xanthine site is built by aspartate 92 and isoleucine 135. Residues 92 to 96 (DTGGT) and 134 to 135 (WI) contribute to the GMP site.

This sequence belongs to the purine/pyrimidine phosphoribosyltransferase family. XGPT subfamily. Homotetramer. Requires Mg(2+) as cofactor.

The protein localises to the cell membrane. It catalyses the reaction GMP + diphosphate = guanine + 5-phospho-alpha-D-ribose 1-diphosphate. The catalysed reaction is XMP + diphosphate = xanthine + 5-phospho-alpha-D-ribose 1-diphosphate. The enzyme catalyses IMP + diphosphate = hypoxanthine + 5-phospho-alpha-D-ribose 1-diphosphate. It participates in purine metabolism; GMP biosynthesis via salvage pathway; GMP from guanine: step 1/1. It functions in the pathway purine metabolism; XMP biosynthesis via salvage pathway; XMP from xanthine: step 1/1. Purine salvage pathway enzyme that catalyzes the transfer of the ribosyl-5-phosphate group from 5-phospho-alpha-D-ribose 1-diphosphate (PRPP) to the N9 position of the 6-oxopurines guanine and xanthine to form the corresponding ribonucleotides GMP (guanosine 5'-monophosphate) and XMP (xanthosine 5'-monophosphate), with the release of PPi. To a lesser extent, also acts on hypoxanthine. The polypeptide is Xanthine-guanine phosphoribosyltransferase (Buchnera aphidicola subsp. Baizongia pistaciae (strain Bp)).